A 459-amino-acid polypeptide reads, in one-letter code: LAS seventeen-binding protein 3 (459 aa).

Residues 219–403 (RPSNGGRGSF…APTSPSTSSP (185 aa)) are disordered. Serine 227 bears the Phosphoserine mark. A compositionally biased stretch (acidic residues) spans 229–242 (DDDEDDYYDDDDYY). Residues 243–262 (NDIPSSFSSTDASSTRPNTR) are compositionally biased toward low complexity. The segment covering 289–300 (YSRNSRLAPTNS) has biased composition (polar residues). At threonine 298 the chain carries Phosphothreonine. Residues serine 300 and serine 303 each carry the phosphoserine modification. The span at 340-350 (DEYDDYDDDYE) shows a compositional bias: acidic residues. A compositionally biased stretch (basic and acidic residues) spans 351-371 (SGYRRGNGRDRTKDREVDDLS). Polar residues predominate over residues 372-391 (NRFSKSRISSASTPQTSQGR). Position 393 is a phosphothreonine (threonine 393). Low complexity predominate over residues 393 to 403 (TAPTSPSTSSP). Phosphoserine is present on residues serine 397, serine 402, and serine 416. The SH3 domain maps to 400–459 (TSSPKAVALYSFAGEESGDLPFRKGDVITILKKSDSQNDWWTGRVNGREGIFPANYVELV).

It belongs to the SH3YL1 family. Interacts with LAS17. Post-translationally, phosphorylation of Ser-397 is induced 2-fold in response to mating pheromone.

The protein resides in the cytoplasm. This is LAS seventeen-binding protein 3 (LSB3) from Saccharomyces cerevisiae (strain YJM789) (Baker's yeast).